The chain runs to 273 residues: NAD kinase (273 aa).

The active-site Proton acceptor is the aspartate 53. Residues aspartate 53–glycine 54, arginine 58, asparagine 128–glutamate 129, aspartate 157, threonine 168–serine 173, and alanine 192 each bind NAD(+).

The protein belongs to the NAD kinase family. It depends on a divalent metal cation as a cofactor.

The protein resides in the cytoplasm. The catalysed reaction is NAD(+) + ATP = ADP + NADP(+) + H(+). Functionally, involved in the regulation of the intracellular balance of NAD and NADP, and is a key enzyme in the biosynthesis of NADP. Catalyzes specifically the phosphorylation on 2'-hydroxyl of the adenosine moiety of NAD to yield NADP. In Finegoldia magna (strain ATCC 29328 / DSM 20472 / WAL 2508) (Peptostreptococcus magnus), this protein is NAD kinase.